Here is a 90-residue protein sequence, read N- to C-terminus: DNA-binding protein HU (90 aa).

The residue at position 4 (Thr4) is a Phosphothreonine. The tract at residues 56-90 is disordered; it reads AARKGRNPQTGEEMEIPASKVPAFKPGKALKDAVK.

It belongs to the bacterial histone-like protein family. As to quaternary structure, homodimer.

Histone-like DNA-binding protein which is capable of wrapping DNA to stabilize it, and thus to prevent its denaturation under extreme environmental conditions. In Geobacillus stearothermophilus (Bacillus stearothermophilus), this protein is DNA-binding protein HU (hup).